Here is a 655-residue protein sequence, read N- to C-terminus: Carboxypeptidase S1 homolog B (655 aa).

The signal sequence occupies residues M1–A21. C51 and C123 are oxidised to a cystine. N130, N163, and N186 each carry an N-linked (GlcNAc...) asparagine glycan. Residue S240 is part of the active site. 3 N-linked (GlcNAc...) asparagine glycosylation sites follow: N266, N302, and N311. Cystine bridges form between C328–C364 and C335–C357. An N-linked (GlcNAc...) asparagine glycan is attached at N414. D459 is a catalytic residue. Residue C462 coordinates substrate. Residues N475, N493, and N506 are each glycosylated (N-linked (GlcNAc...) asparagine). H517 is an active-site residue. Substrate is bound at residue E518. N-linked (GlcNAc...) asparagine glycosylation is found at N598 and N612. G631 is lipidated: GPI-anchor amidated glycine. A propeptide spans A632 to I655 (removed in mature form).

This sequence belongs to the peptidase S10 family.

Its subcellular location is the cell membrane. The catalysed reaction is Preferential release of a C-terminal arginine or lysine residue.. Functionally, extracellular serine carboxypeptidase that contributes to pathogenicity. The chain is Carboxypeptidase S1 homolog B (SCPB) from Arthroderma otae (strain ATCC MYA-4605 / CBS 113480) (Microsporum canis).